The chain runs to 525 residues: Biotinidase (525 aa).

The signal sequence occupies residues 1-26 (MSRAGRQLALLLCSCCVAVAIPGGLA). The CN hydrolase domain occupies 54–333 (DPLALTSREQ…PGLISAGNAT (280 aa)). Glu94 acts as the Proton acceptor in catalysis. Residues Asn132 and Asn185 are each glycosylated (N-linked (GlcNAc...) asparagine). Residue Lys194 is the Proton donor of the active site. The Nucleophile role is filled by Cys227. N-linked (GlcNAc...) asparagine glycosylation occurs at Asn384.

It belongs to the carbon-nitrogen hydrolase superfamily. BTD/VNN family.

It is found in the secreted. Its subcellular location is the extracellular space. The catalysed reaction is biocytin + H2O = biotin + L-lysine. It carries out the reaction biotin amide + H2O = biotin + NH4(+). In terms of biological role, catalytic release of biotin from biocytin, the product of biotin-dependent carboxylases degradation. The sequence is that of Biotinidase (BTD) from Bos taurus (Bovine).